The following is a 569-amino-acid chain: Proline--tRNA ligase (569 aa).

This sequence belongs to the class-II aminoacyl-tRNA synthetase family. ProS type 1 subfamily. Homodimer.

The protein localises to the cytoplasm. It catalyses the reaction tRNA(Pro) + L-proline + ATP = L-prolyl-tRNA(Pro) + AMP + diphosphate. Catalyzes the attachment of proline to tRNA(Pro) in a two-step reaction: proline is first activated by ATP to form Pro-AMP and then transferred to the acceptor end of tRNA(Pro). As ProRS can inadvertently accommodate and process non-cognate amino acids such as alanine and cysteine, to avoid such errors it has two additional distinct editing activities against alanine. One activity is designated as 'pretransfer' editing and involves the tRNA(Pro)-independent hydrolysis of activated Ala-AMP. The other activity is designated 'posttransfer' editing and involves deacylation of mischarged Ala-tRNA(Pro). The misacylated Cys-tRNA(Pro) is not edited by ProRS. The polypeptide is Proline--tRNA ligase (Dehalococcoides mccartyi (strain ATCC BAA-2266 / KCTC 15142 / 195) (Dehalococcoides ethenogenes (strain 195))).